The sequence spans 374 residues: Diels-Alderase fsa2 (374 aa).

The tract at residues 1–216 (MSNVTVSAFT…MDRVWSPLSW (216 aa)) is beta-sandwich motif. The segment at 216 to 374 (WPQVMTESYY…VGTGGQCELS (159 aa)) is beta-barrel motif.

The protein belongs to the Diels-Alderase family.

The catalysed reaction is (5S)-3-[(2E,6R,8E,10E,12E)-2,6-dimethyltetradeca-2,8,10,12-tetraenoyl]-5-(hydroxymethyl)pyrrolidine-2,4-dione = trichosetin. It participates in mycotoxin biosynthesis. In terms of biological role, diels-Alderase; part of the gene cluster that mediates the biosynthesis of the HIV-1 integrase inhibitor equisetin and of fusarisetin A, both trans-fused decalin-containing tetramic acids showing also antimicrobial activity. The PKS module of fsa1 together with the enoylreductase fsa3 catalyze the formation of the polyketide unit which is then conjugated to L-serine by the condensation domain of the fsa1 NRPS module. Activity of the Dieckmann cyclase domain (RED) results in release of the Dieckmann product intermediate. Diels-Alderase fsa2 is involved in endo-selective Diels-Alder cycloaddition to form the decalin ring, leading to the production of N-desmethylequisetin also called trichosetin. Subsequent N-methylation is carried out by fsa4 to give equisetin. The enzymatic gene responsible for the conversion of equisetin to fusarisetin A has not been identified yet and is probably located outside of the fsa cluster. This chain is Diels-Alderase fsa2, found in Fusarium sp. (strain FN080326).